The sequence spans 107 residues: Homeobox protein HD-3 (107 aa).

Residues 6-65 (SKAPRTRMTAGQTRVLMSFFKDNPFPSTTAREKLSKVLGVGPRTVQIWFQNQRQKARGQA) constitute a DNA-binding region (homeobox).

It is found in the nucleus. This Encephalitozoon cuniculi (strain GB-M1) (Microsporidian parasite) protein is Homeobox protein HD-3 (HD-3).